A 403-amino-acid polypeptide reads, in one-letter code: Argininosuccinate synthase (403 aa).

Residues 13-21 and Ala40 contribute to the ATP site; that span reads AYSGGLDTS. The L-citrulline site is built by Tyr92 and Ser97. Gly122 provides a ligand contact to ATP. L-aspartate-binding residues include Thr124, Asn128, and Asp129. Asn128 is a binding site for L-citrulline. Positions 132, 181, 190, 266, and 278 each coordinate L-citrulline.

This sequence belongs to the argininosuccinate synthase family. Type 1 subfamily. Homotetramer.

It localises to the cytoplasm. The catalysed reaction is L-citrulline + L-aspartate + ATP = 2-(N(omega)-L-arginino)succinate + AMP + diphosphate + H(+). The protein operates within amino-acid biosynthesis; L-arginine biosynthesis; L-arginine from L-ornithine and carbamoyl phosphate: step 2/3. The protein is Argininosuccinate synthase of Aliivibrio salmonicida (strain LFI1238) (Vibrio salmonicida (strain LFI1238)).